We begin with the raw amino-acid sequence, 294 residues long: Nucleophosmin (294 aa).

Residues 121–133 (LEEEPESEDEEED) show a composition bias toward acidic residues. Residues 121-244 (LEEEPESEDE…PKTPKVPLSL (124 aa)) are disordered. The Nuclear localization signal motif lies at 153–158 (PQKKPK). Acidic residues predominate over residues 161 to 186 (EDDEDDDEDEDDDEDDEDDLDDDEEE). Positions 190–196 (PMKKPAR) match the Nuclear localization signal motif. Over residues 223-233 (KTPDSKKDKSL) the composition is skewed to basic and acidic residues.

This sequence belongs to the nucleoplasmin family. As to quaternary structure, decamer formed by two pentameric rings associated in a head-to-head fashion. In terms of processing, phosphorylated.

The protein localises to the cytoplasm. It localises to the nucleus. It is found in the nucleoplasm. The protein resides in the nucleolus. Acts as a chaperonin for the core histones H3, H2B and H4. Associated with nucleolar ribonucleoprotein structures and bind single-stranded nucleic acids. It may function in the assembly and/or transport of ribosome. May stimulate endonuclease activity on apurinic/apyrimidinic (AP) double-stranded DNA. May inhibit endonuclease activity on AP single-stranded RNA. The polypeptide is Nucleophosmin (NPM1) (Gallus gallus (Chicken)).